The sequence spans 548 residues: Lysine--tRNA ligase (548 aa).

Positions 52–60 (PSGLPHIGT) match the 'HIGH' region motif. The short motif at 300-304 (KISKS) is the 'KMSKS' region element. Lysine 303 contacts ATP.

This sequence belongs to the class-I aminoacyl-tRNA synthetase family.

It localises to the cytoplasm. The catalysed reaction is tRNA(Lys) + L-lysine + ATP = L-lysyl-tRNA(Lys) + AMP + diphosphate. This is Lysine--tRNA ligase from Mesorhizobium japonicum (strain LMG 29417 / CECT 9101 / MAFF 303099) (Mesorhizobium loti (strain MAFF 303099)).